The following is a 275-amino-acid chain: Adaptin ear-binding coat-associated protein 1 (275 aa).

The disordered stretch occupies residues 166–190; the sequence is ITTKKGGTSKPKTAGTGGLSLLPPP. The segment covering 167–179 has biased composition (low complexity); the sequence is TTKKGGTSKPKTA. Threonine 211 is subject to Phosphothreonine. The tract at residues 215-275 is disordered; sequence IPKSNHGGSD…APQPSNWVQF (61 aa). 2 short sequence motifs (WXXF motif) span residues 252–255 and 272–275; these read WGDF and WVQF. The segment covering 256-275 has biased composition (polar residues); the sequence is STASSSVPNQAPQPSNWVQF.

Belongs to the NECAP family. In terms of assembly, interacts with AP1G1 and AP2A1 components of the adapter protein complexes AP-1 and AP-2. Interacts with the GAE domain proteins GGA1, GGA2 and GGA3.

The protein localises to the cytoplasmic vesicle. The protein resides in the clathrin-coated vesicle membrane. It is found in the cell membrane. Involved in endocytosis. This chain is Adaptin ear-binding coat-associated protein 1 (NECAP1), found in Bos taurus (Bovine).